A 125-amino-acid polypeptide reads, in one-letter code: Fumarate reductase subunit D (125 aa).

3 helical membrane-spanning segments follow: residues 30 to 50, 63 to 83, and 105 to 125; these read FAMI…LGVI, FATS…PMWH, and IACY…IFMI.

This sequence belongs to the FrdD family. Part of an enzyme complex containing four subunits: a flavoprotein (FrdA), an iron-sulfur protein (FrdB), and two hydrophobic anchor proteins (FrdC and FrdD).

Its subcellular location is the cell inner membrane. Its function is as follows. Anchors the catalytic components of the fumarate reductase complex to the cell membrane, binds quinones. This chain is Fumarate reductase subunit D, found in Vibrio campbellii (strain ATCC BAA-1116).